Here is a 153-residue protein sequence, read N- to C-terminus: Protein Smg homolog (153 aa).

It belongs to the Smg family.

This is Protein Smg homolog from Neisseria meningitidis serogroup B (strain ATCC BAA-335 / MC58).